The following is a 446-amino-acid chain: Thymidine phosphorylase (446 aa).

It belongs to the thymidine/pyrimidine-nucleoside phosphorylase family. As to quaternary structure, homodimer.

The enzyme catalyses thymidine + phosphate = 2-deoxy-alpha-D-ribose 1-phosphate + thymine. It functions in the pathway pyrimidine metabolism; dTMP biosynthesis via salvage pathway; dTMP from thymine: step 1/2. The enzymes which catalyze the reversible phosphorolysis of pyrimidine nucleosides are involved in the degradation of these compounds and in their utilization as carbon and energy sources, or in the rescue of pyrimidine bases for nucleotide synthesis. The sequence is that of Thymidine phosphorylase from Idiomarina loihiensis (strain ATCC BAA-735 / DSM 15497 / L2-TR).